The following is a 104-amino-acid chain: Large ribosomal subunit protein bL21 (104 aa).

It belongs to the bacterial ribosomal protein bL21 family. In terms of assembly, part of the 50S ribosomal subunit. Contacts protein L20.

In terms of biological role, this protein binds to 23S rRNA in the presence of protein L20. This chain is Large ribosomal subunit protein bL21, found in Streptococcus uberis (strain ATCC BAA-854 / 0140J).